Reading from the N-terminus, the 370-residue chain is Ubiquitin carboxyl-terminal hydrolase 12 (370 aa).

The short motif at 1–4 is the Required for plasma membrane localization of USP12/WDR20 element; sequence MEIL. The region spanning 39 to 369 is the USP domain; the sequence is FGLVNFGNTC…SGYILFYQSR (331 aa). Residue Cys-48 is the Nucleophile of the active site. A compositionally biased stretch (basic and acidic residues) spans 146–157; it reads QEKQNGRLRNGD. The interval 146-168 is disordered; that stretch reads QEKQNGRLRNGDVDSEDNNSTPD. Residues Cys-186, Cys-189, Cys-233, and Cys-236 each contribute to the Zn(2+) site. The active-site Proton acceptor is the His-317.

It belongs to the peptidase C19 family. USP12/USP46 subfamily. As to quaternary structure, interacts with WDR48. Interacts with WDR20; this interaction promotes translocation of the USP12 complex to the plasma membrane. Component of the USP12-WDR20-WDR48 deubiquitinating complex. Component of the USP12-DMWD-WDR48 deubiquitinating complex. Interacts with PHLPP1. Interacts with RBPJ. Interacts with CBP; this interaction blocks the acetyltransferase activity of CREBBP. Interacts with ITCH; the interaction is more efficient when both USP12 and WDR48/UAF1 are involved and may mediate recruitment of the USP12 deubiquitinating complex to Notch.

It is found in the nucleus. The protein localises to the cytoplasm. It localises to the cell membrane. It carries out the reaction Thiol-dependent hydrolysis of ester, thioester, amide, peptide and isopeptide bonds formed by the C-terminal Gly of ubiquitin (a 76-residue protein attached to proteins as an intracellular targeting signal).. With respect to regulation, activated by interaction with WDR20, WDR48 and DMWD through different allosteric mechanisms. Deubiquitinating enzyme that plays various roles in the regulation of the immune response and inflammation. During TCR engagement and activation, translocates into the cytoplasm and deubiquitinates its substrates LAT and TRAT1 and prevents their lysosome-dependent degradation to stabilize the TCR signaling complex at the plasma membrane. Plays an essential role in the selective LPS-induced macrophage response through the activation of NF-kappa-B pathway. In addition, promotes that antiviral immune response through targeting DNA sensor IFI16 to inhibit its proteasome-dependent degradation. Participates in the interferon signaling pathway and antiviral response independently of its deubiquitinase activity by maintaining nuclear phosphorylated STAT1 levels via inhibition of its CREBBP-mediated acetylation and subsequent dephosphorylation. Plays an intrinsic role in promoting the differentiation, activation and proliferation of CD4(+) T-cell by activating the NF-kappa-B signaling pathway through deubiquitinating and stabilizing B-cell lymphoma/leukemia 10/BCL10. In myeloid-derived suppressor cells promotes the activation of the NF-kappa-B via deubiquitination and stabilization of RELA. Regulates the 'Lys-63'-linked polyubiquitin chains of BAX and thereby modulates the mitochondrial apoptotic process. Negative regulator of NOTCH signaling that specifically deubiquitinates non-activated NOTCH receptors to target them for lysosomal degradation; deubiquitination of NOTCH stimulates its transport form late endosomes to lysosomes. Protects neurons against HTT/huntingtin-induced polyglutamine expansion-dependent neurodegeneration through regulation of autophagic flux. This function is independent of deubiquitinase activity or of other components of the USP12-WDR20-WDR48 deubiquitinating complex. In complex with WDR48, acts as a potential tumor suppressor by positively regulating PHLPP1 stability. This chain is Ubiquitin carboxyl-terminal hydrolase 12, found in Rattus norvegicus (Rat).